The chain runs to 129 residues: uncharacterized protein (129 aa).

The interval 52-94 (NGDEESQDDWLNDLLKSDGDGGKAGPVDPSHPMETTTTDHSSQ) is disordered. Positions 53–62 (GDEESQDDWL) are enriched in acidic residues. Positions 84–94 (METTTTDHSSQ) are enriched in polar residues.

This is an uncharacterized protein from Caenorhabditis elegans.